The primary structure comprises 496 residues: Polyamine oxidase 6 (496 aa).

An N-terminal signal peptide occupies residues 1–27 (MTKPTTMAIFLVLALSIAQLLPSLVAG). The FAD site is built by Glu61 and Arg69. 2 N-linked (GlcNAc...) asparagine glycosylation sites follow: Asn103 and Asn150. Position 261 (Val261) interacts with FAD. A glycan (N-linked (GlcNAc...) asparagine) is linked at Asn278. An FAD-binding site is contributed by Glu454.

Belongs to the flavin monoamine oxidase family. It depends on FAD as a cofactor.

It localises to the secreted. Its subcellular location is the extracellular space. The protein localises to the apoplast. It functions in the pathway amine and polyamine degradation; spermine degradation. Flavoenzyme involved in polyamine back-conversion. Catalyzes the oxidation of the secondary amino group of polyamines, such as spermine and spermidine. This Oryza sativa subsp. japonica (Rice) protein is Polyamine oxidase 6.